The following is a 132-amino-acid chain: MWDLFYFKVFFWVVLISLCIFMVHRNGKVANKFRELRSRFQSRFNRHISLNDSFTDDLESGLHSSNFDIISENNNDTRGGLDDISKNEIKQIMEMNNISFDKARLLYMERKFGQNGIAPDGTPIDPKAFTFD.

The first 25 residues, 1–25 (MWDLFYFKVFFWVVLISLCIFMVHR), serve as a signal peptide directing secretion.

Belongs to the UPF0357 family.

In Saccharomyces bayanus (Yeast), this protein is UPF0357 protein YCL012C (YCL012C).